Consider the following 121-residue polypeptide: Cell division protein FtsB (121 aa).

Topologically, residues 1-6 (MRNWRW) are cytoplasmic. The helical transmembrane segment at 7–24 (LLLVLAVLLAWLQYRFWF) threads the bilayer. Over 25 to 121 (GPGNSGEVMM…AASADPVDHP (97 aa)) the chain is Periplasmic. Positions 31-66 (EVMMLEAQVAHQTRDNEGLRQRNQALAAEVKDLKDG) form a coiled coil. Positions 98 to 121 (PPAAQEAAPPAQPPAASADPVDHP) are disordered.

This sequence belongs to the FtsB family. In terms of assembly, part of a complex composed of FtsB, FtsL and FtsQ.

It localises to the cell inner membrane. In terms of biological role, essential cell division protein. May link together the upstream cell division proteins, which are predominantly cytoplasmic, with the downstream cell division proteins, which are predominantly periplasmic. The polypeptide is Cell division protein FtsB (Xanthomonas campestris pv. campestris (strain 8004)).